We begin with the raw amino-acid sequence, 79 residues long: Hematopoietic cell signal transducer (79 aa).

An N-terminal signal peptide occupies residues 1-18 (MVPPGNILFLLLLPVATA). The Extracellular segment spans residues 19–35 (QMTPGSCSGCGPLSLPL). A helical transmembrane segment spans residues 36–56 (LAGLVAADAVVSLLIVVVVFV). The Cytoplasmic portion of the chain corresponds to 57 to 79 (CARLRSRPTQEDDKIYINMPGRG). Position 72 is a phosphotyrosine (Y72). Residues 72–74 (YIN) are GRB2 binding site. The PIK3R1 binding site stretch occupies residues 72–75 (YINM).

The protein belongs to the DAP10 family. As to quaternary structure, homodimer; Disulfide-linked. Heterohexamer composed of four subunits of HCST/DAP10 and two subunits of KLRK1. Interacts (via transmembrane domain) with KLRK1 (via transmembrane domain); the interaction is required for KLRK1 NK cell surface and induces NK cell-mediated cytotoxicity. Interacts with PIK3R1 and GRB2. Interacts with CLEC5A. Forms an CLEC5A/TYROBP/HCST trimolecular complex depending almost solely on TYROBP. Interacts with KLRK1. Interacts with CD300H. In terms of processing, phosphorylated; PIK3R1 and GRB2 associate specifically with tyrosine-phosphorylated HCST. O-glycosylated.

The protein resides in the membrane. Its function is as follows. Transmembrane adapter protein which associates with KLRK1 to form an activation receptor KLRK1-HCST in lymphoid and myeloid cells; this receptor plays a major role in triggering cytotoxicity against target cells expressing cell surface ligands such as MHC class I chain-related MICA and MICB, and UL16-binding proteins (ULBPs); these ligands are up-regulated by stress conditions and pathological state such as viral infection and tumor transformation. Functions as a docking site for PI3-kinase PIK3R1 and GRB2. Interaction of ULBPs with KLRK1-HCST triggers calcium mobilization and activation of the PIK3R1, MAP2K/ERK, and JAK2/STAT5 signaling pathways. Both PIK3R1 and GRB2 are required for full KLRK1-HCST-mediated activation and ultimate killing of target cells. In NK cells, KLRK1-HCST signaling directly induces cytotoxicity and enhances cytokine production initiated via DAP12/TYROBP-associated receptors. In T-cells, it provides primarily costimulation for TCR-induced signals. KLRK1-HCST receptor plays a role in immune surveillance against tumors and is required for cytolysis of tumors cells; indeed, melanoma cells that do not express KLRK1 ligands escape from immune surveillance mediated by NK cells. This Bos taurus (Bovine) protein is Hematopoietic cell signal transducer (HCST).